The chain runs to 216 residues: Triosephosphate isomerase (216 aa).

7–9 (NLK) provides a ligand contact to substrate. The Electrophile role is filled by H89. The active-site Proton acceptor is the E137. Substrate is bound by residues I142, G175, and 196-197 (AS).

It belongs to the triosephosphate isomerase family. As to quaternary structure, homotetramer; dimer of dimers.

The protein resides in the cytoplasm. It catalyses the reaction D-glyceraldehyde 3-phosphate = dihydroxyacetone phosphate. It functions in the pathway carbohydrate biosynthesis; gluconeogenesis. Its pathway is carbohydrate degradation; glycolysis; D-glyceraldehyde 3-phosphate from glycerone phosphate: step 1/1. Its function is as follows. Involved in the gluconeogenesis. Catalyzes stereospecifically the conversion of dihydroxyacetone phosphate (DHAP) to D-glyceraldehyde-3-phosphate (G3P). This is Triosephosphate isomerase from Thermoplasma acidophilum (strain ATCC 25905 / DSM 1728 / JCM 9062 / NBRC 15155 / AMRC-C165).